The following is a 200-amino-acid chain: Sec-independent protein translocase protein TatB (200 aa).

Residues 2–22 form a helical membrane-spanning segment; that stretch reads LPDIGGTELLIIAAVALIVVG. The segment at 160-200 is disordered; the sequence is KAPRKRASQKQEITVEAPKAVRAPRKRASKAGDSTASDIVS. Residues 191–200 show a composition bias toward polar residues; that stretch reads GDSTASDIVS.

It belongs to the TatB family. The Tat system comprises two distinct complexes: a TatABC complex, containing multiple copies of TatA, TatB and TatC subunits, and a separate TatA complex, containing only TatA subunits. Substrates initially bind to the TatABC complex, which probably triggers association of the separate TatA complex to form the active translocon.

The protein resides in the cell inner membrane. Functionally, part of the twin-arginine translocation (Tat) system that transports large folded proteins containing a characteristic twin-arginine motif in their signal peptide across membranes. Together with TatC, TatB is part of a receptor directly interacting with Tat signal peptides. TatB may form an oligomeric binding site that transiently accommodates folded Tat precursor proteins before their translocation. The protein is Sec-independent protein translocase protein TatB of Caulobacter vibrioides (strain ATCC 19089 / CIP 103742 / CB 15) (Caulobacter crescentus).